Reading from the N-terminus, the 21-residue chain is Snake venom serine protease jerdonase (21 aa).

Residues 1 to 21 (IIGGDECNINEHPFLVALYDA) form the Peptidase S1 domain.

This sequence belongs to the peptidase S1 family. Snake venom subfamily. In terms of assembly, monomer. In terms of processing, glycosylated; contains 35.8% neutral carbohydrate. As to expression, expressed by the venom gland.

It localises to the secreted. Its activity is regulated as follows. Inhibited by PMSF and soybean trypsin inhibitor. Partially inhibited by L-cysteine and DTT. Not affected by EDTA. Multifunctional venom serine protease that has fibrino(geno)lytic activity towards the A alpha-chain of human fibrinogen (FGA) and a slow activity towards the B beta-chain (FGB). Also hydrolyzes bovine low-molecular-mass kininogen and releases bradykinin. Catalyzes the hydrolysis of BAEE, S-2238 and S-2302. The protein is Snake venom serine protease jerdonase of Protobothrops jerdonii (Jerdon's pitviper).